We begin with the raw amino-acid sequence, 134 residues long: Large ribosomal subunit protein bL20 (134 aa).

This sequence belongs to the bacterial ribosomal protein bL20 family.

In terms of biological role, binds directly to 23S ribosomal RNA and is necessary for the in vitro assembly process of the 50S ribosomal subunit. It is not involved in the protein synthesizing functions of that subunit. The polypeptide is Large ribosomal subunit protein bL20 (Sinorhizobium medicae (strain WSM419) (Ensifer medicae)).